A 492-amino-acid chain; its full sequence is Beta-glucosidase 38 (492 aa).

A signal peptide spans 1–21; sequence MNMPLLLLIAIVVVSLSHGNG. Gln45 is a binding site for a beta-D-glucoside. N-linked (GlcNAc...) asparagine glycans are attached at residues Asn73 and Asn77. A beta-D-glucoside contacts are provided by residues His146 and 191–192; that span reads NE. Residue Glu192 is the Proton donor of the active site. A disulfide bridge links Cys211 with Cys214. The N-linked (GlcNAc...) asparagine glycan is linked to Asn310. Position 331 (Tyr331) interacts with a beta-D-glucoside. Asn341 carries N-linked (GlcNAc...) asparagine glycosylation. Glu400 contacts a beta-D-glucoside. Residue Glu400 is the Nucleophile of the active site. Asn408 carries N-linked (GlcNAc...) asparagine glycosylation. A beta-D-glucoside is bound by residues Trp447, 454–455, and Phe463; that span reads EW.

This sequence belongs to the glycosyl hydrolase 1 family.

It carries out the reaction Hydrolysis of terminal, non-reducing beta-D-glucosyl residues with release of beta-D-glucose.. The polypeptide is Beta-glucosidase 38 (BGLU38) (Oryza sativa subsp. japonica (Rice)).